A 225-amino-acid polypeptide reads, in one-letter code: Protein LiaH (225 aa).

Coiled-coil stretches lie at residues 58–151 (KKYE…KEHM) and 161–182 (ESAY…IRAN).

This sequence belongs to the PspA/Vipp/IM30 family.

The chain is Protein LiaH (liaH) from Bacillus subtilis (strain 168).